The sequence spans 301 residues: Ribonuclease H2 subunit A (301 aa).

An N-acetylmethionine modification is found at M1. One can recognise an RNase H type-2 domain in the interval 28–251 (PCVLGVDEAG…AQAILEKEAE (224 aa)). A divalent metal cation contacts are provided by D34, E35, and D142. T217 is modified (phosphothreonine). Residue S258 is modified to Phosphoserine.

This sequence belongs to the RNase HII family. Eukaryotic subfamily. In terms of assembly, the RNase H2 complex is a heterotrimer composed of the catalytic subunit RNASEH2A and the non-catalytic subunits RNASEH2B and RNASEH2C. The cofactor is Mn(2+). Mg(2+) serves as cofactor.

It localises to the nucleus. The enzyme catalyses Endonucleolytic cleavage to 5'-phosphomonoester.. In terms of biological role, catalytic subunit of RNase HII, an endonuclease that specifically degrades the RNA of RNA:DNA hybrids. Participates in DNA replication, possibly by mediating the removal of lagging-strand Okazaki fragment RNA primers during DNA replication. Mediates the excision of single ribonucleotides from DNA:RNA duplexes. The chain is Ribonuclease H2 subunit A (Rnaseh2a) from Rattus norvegicus (Rat).